The sequence spans 391 residues: uncharacterized protein (391 aa).

The N-terminal stretch at 1–20 (MRKLFLLSILMIGVIVAFAG) is a signal peptide. A lipid anchor (S-archaeol cysteine) is attached at Cys21. Residues 104–377 (RIVTDFYCPI…DFAKMIHPEL (274 aa)) enclose the Fe/B12 periplasmic-binding domain.

It is found in the cell membrane. This is an uncharacterized protein from Methanocaldococcus jannaschii (strain ATCC 43067 / DSM 2661 / JAL-1 / JCM 10045 / NBRC 100440) (Methanococcus jannaschii).